The primary structure comprises 520 residues: GMP synthase [glutamine-hydrolyzing] (520 aa).

The Glutamine amidotransferase type-1 domain maps to 12-205 (KIIVLDYGSQ…AISICGARGD (194 aa)). The active-site Nucleophile is the Cys-89. Catalysis depends on residues His-179 and Glu-181. Residues 206-395 (WSMDNFIDME…LGMPEEIVWR (190 aa)) form the GMPS ATP-PPase domain. 233–239 (SGGVDSS) is a binding site for ATP.

As to quaternary structure, homodimer.

It carries out the reaction XMP + L-glutamine + ATP + H2O = GMP + L-glutamate + AMP + diphosphate + 2 H(+). It functions in the pathway purine metabolism; GMP biosynthesis; GMP from XMP (L-Gln route): step 1/1. Its function is as follows. Catalyzes the synthesis of GMP from XMP. The sequence is that of GMP synthase [glutamine-hydrolyzing] from Streptococcus pyogenes serotype M3 (strain SSI-1).